The following is a 343-amino-acid chain: WAT1-related protein At1g43650 (343 aa).

The next 10 helical transmembrane spans lie at 9-29 (MAMV…KVAI), 36-56 (FVFV…FAFF), 65-85 (LSFI…TLSL), 98-118 (TFAA…ALLF), 130-150 (GVAK…FAFV), 175-195 (SVKG…WIIM), 209-229 (LVAL…VAVN), 239-259 (FGLP…LTYW), 272-292 (FTAL…SFLF), and 296-316 (FYLG…LGLW). 2 consecutive EamA domains span residues 16–139 (IVYA…GSMV) and 188–313 (CWCL…GLYL).

It belongs to the drug/metabolite transporter (DMT) superfamily. Plant drug/metabolite exporter (P-DME) (TC 2.A.7.4) family.

The protein resides in the membrane. The chain is WAT1-related protein At1g43650 from Arabidopsis thaliana (Mouse-ear cress).